The chain runs to 164 residues: MIILGIDPGLAILGYGIINYEGNRFKVLDYGAITTPSTMATPERLKTIYRELDRIITEYNPDTVAIEELFFNTNVKTALLVGHARGVAVLSAANHNKEIFEYTPLQVKQGVVGYGRADKSQIQQMVKTLLNLTKVPKPDDVADALAVAICHAHTGNFTEMFKIK.

Residues Asp-7, Glu-67, and Asp-140 contribute to the active site. Asp-7, Glu-67, and Asp-140 together coordinate Mg(2+).

This sequence belongs to the RuvC family. Homodimer which binds Holliday junction (HJ) DNA. The HJ becomes 2-fold symmetrical on binding to RuvC with unstacked arms; it has a different conformation from HJ DNA in complex with RuvA. In the full resolvosome a probable DNA-RuvA(4)-RuvB(12)-RuvC(2) complex forms which resolves the HJ. It depends on Mg(2+) as a cofactor.

It localises to the cytoplasm. The catalysed reaction is Endonucleolytic cleavage at a junction such as a reciprocal single-stranded crossover between two homologous DNA duplexes (Holliday junction).. In terms of biological role, the RuvA-RuvB-RuvC complex processes Holliday junction (HJ) DNA during genetic recombination and DNA repair. Endonuclease that resolves HJ intermediates. Cleaves cruciform DNA by making single-stranded nicks across the HJ at symmetrical positions within the homologous arms, yielding a 5'-phosphate and a 3'-hydroxyl group; requires a central core of homology in the junction. The consensus cleavage sequence is 5'-(A/T)TT(C/G)-3'. Cleavage occurs on the 3'-side of the TT dinucleotide at the point of strand exchange. HJ branch migration catalyzed by RuvA-RuvB allows RuvC to scan DNA until it finds its consensus sequence, where it cleaves and resolves the cruciform DNA. The chain is Crossover junction endodeoxyribonuclease RuvC from Alkaliphilus oremlandii (strain OhILAs) (Clostridium oremlandii (strain OhILAs)).